The sequence spans 338 residues: Large ribosomal subunit protein uL3 (338 aa).

Disordered regions lie at residues 1–44 (MPQP…GFAG), 151–170 (AVPSVPKKKPDVMETRVGGG), 206–259 (VTKG…GQTG), and 312–338 (FRPAVRPNDQPRLDPEVRYVSNESNQG). Residues 22–31 (SETPRFNSWP) show a composition bias toward polar residues. A compositionally biased stretch (basic residues) spans 220–237 (GVQKRKGKHARQGWRRRI). The span at 247 to 259 (RVRSTVPQQGQTG) shows a compositional bias: polar residues.

Belongs to the universal ribosomal protein uL3 family. In terms of assembly, part of the 50S ribosomal subunit. Forms a cluster with proteins L14 and L24e. Interacts weakly with protein L13.

One of the primary rRNA binding proteins, it binds directly near the 3'-end of the 23S rRNA, where it nucleates assembly of the 50S subunit. The protein is Large ribosomal subunit protein uL3 (rpl3) of Haloarcula marismortui (strain ATCC 43049 / DSM 3752 / JCM 8966 / VKM B-1809) (Halobacterium marismortui).